Reading from the N-terminus, the 330-residue chain is MGTHRIILGLAALCCFCLPHLIEAKPFEVIVDQSGHGNFTTIQKAIDSVPINNTHWFFINVKAGLYREKITIPQKKPFIVIVGAGKRSTRVEWDDHASLAQSPTFATLADNTVVKKITFANSYNFPSNGKINKNPRVPAVAAFIGGDKSAFYSVGFAGIQDTLWDSDGRHYFHRCTIQGAVDFILGSGQSIYQSCVIQVLGGQLGPGVTGYITAQGRTNANDANGFVFINCLVHGFGKAYLGRAWRPYSRVIFYNSNLTDVVDPLGWWEWNYQGYEKQLTYAEHGCFGSGSNTSRRAKWVKKLSASAVQHLADLSFINRGGWVEDLPIRV.

Residues 1 to 24 (MGTHRIILGLAALCCFCLPHLIEA) form the signal peptide. Residues Asn-38 and Asn-52 are each glycosylated (N-linked (GlcNAc...) asparagine). Asp-161 serves as the catalytic Proton donor. Residue Asp-182 is the Nucleophile of the active site. Residues Arg-243 and Trp-245 each coordinate substrate. Residues Asn-257 and Asn-292 are each glycosylated (N-linked (GlcNAc...) asparagine).

Belongs to the pectinesterase family.

It localises to the secreted. The protein localises to the cell wall. It catalyses the reaction [(1-&gt;4)-alpha-D-galacturonosyl methyl ester](n) + n H2O = [(1-&gt;4)-alpha-D-galacturonosyl](n) + n methanol + n H(+). Its pathway is glycan metabolism; pectin degradation; 2-dehydro-3-deoxy-D-gluconate from pectin: step 1/5. In terms of biological role, acts in the modification of cell walls via demethylesterification of cell wall pectin. The chain is Probable pectinesterase 55 (PME55) from Arabidopsis thaliana (Mouse-ear cress).